A 203-amino-acid polypeptide reads, in one-letter code: Somatotropin (203 aa).

Residues 1–17 (MNRVILLLSVMCVGVSS) form the signal peptide. Q18 bears the Pyrrolidone carboxylic acid mark. 2 disulfide bridges follow: C68/C176 and C193/C201.

Belongs to the somatotropin/prolactin family.

It is found in the secreted. In terms of biological role, growth hormone plays an important role in growth control and is involved in the regulation of several anabolic processes. Implicated as an osmoregulatory substance important for seawater adaptation. This chain is Somatotropin (gh), found in Verasper variegatus (Spotted flounder).